We begin with the raw amino-acid sequence, 84 residues long: Toxin Acra3 (84 aa).

An N-terminal signal peptide occupies residues Met1–Ser17. An LCN-type CS-alpha/beta domain is found at Arg19 to Lys82. Disulfide bonds link Cys30/Cys81, Cys34/Cys57, Cys43/Cys62, and Cys47/Cys64. The residue at position 83 (Ser83) is a Serine amide.

Belongs to the long (4 C-C) scorpion toxin superfamily. Sodium channel inhibitor family. Beta subfamily. In terms of tissue distribution, expressed by the venom gland.

It localises to the secreted. In terms of biological role, toxin with unknown target. In vivo, induces severe neurotoxic events in mice such as excitability and convulsions, leading to the death of the animals within a few minutes after injection. Exerts very strong cytotoxic effect on a mouse brain tumor cell line (BC3H1) (IC(50)=5 mg/ml). It exerts its effects by inducing a stronger necrosis than apoptosis in BC3H1 cells. The polypeptide is Toxin Acra3 (Androctonus crassicauda (Arabian fat-tailed scorpion)).